The sequence spans 286 residues: Bifunctional protein FolD (286 aa).

NADP(+)-binding positions include 170 to 172 (GHS) and Ile236.

Belongs to the tetrahydrofolate dehydrogenase/cyclohydrolase family. In terms of assembly, homodimer.

The catalysed reaction is (6R)-5,10-methylene-5,6,7,8-tetrahydrofolate + NADP(+) = (6R)-5,10-methenyltetrahydrofolate + NADPH. It carries out the reaction (6R)-5,10-methenyltetrahydrofolate + H2O = (6R)-10-formyltetrahydrofolate + H(+). The protein operates within one-carbon metabolism; tetrahydrofolate interconversion. Its function is as follows. Catalyzes the oxidation of 5,10-methylenetetrahydrofolate to 5,10-methenyltetrahydrofolate and then the hydrolysis of 5,10-methenyltetrahydrofolate to 10-formyltetrahydrofolate. The chain is Bifunctional protein FolD from Methanococcoides burtonii (strain DSM 6242 / NBRC 107633 / OCM 468 / ACE-M).